Reading from the N-terminus, the 300-residue chain is Free fatty acid receptor 1 (300 aa).

Residues Met-1–Phe-8 lie on the Extracellular side of the membrane. The helical transmembrane segment at Phe-9–Val-31 threads the bilayer. Topologically, residues Ala-32–Asn-41 are cytoplasmic. A helical membrane pass occupies residues Leu-42–Val-64. Residues Glu-65–Cys-79 are Extracellular-facing. Cysteines 79 and 170 form a disulfide. The chain crosses the membrane as a helical span at residues Pro-80–Ser-101. Residues Ala-102 to Arg-121 are Cytoplasmic-facing. The chain crosses the membrane as a helical span at residues Tyr-122–Leu-142. The Extracellular portion of the chain corresponds to Gly-143–Ser-178. A glycan (N-linked (GlcNAc...) asparagine) is linked at Asn-152. Residues Ala-179–Phe-200 traverse the membrane as a helical segment. Residues Cys-201–Ala-223 lie on the Cytoplasmic side of the membrane. Residues Trp-224–Phe-248 traverse the membrane as a helical segment. Residues Val-249–Ser-256 lie on the Extracellular side of the membrane. Residues Trp-257–Leu-279 traverse the membrane as a helical segment. Residues Gly-280–Lys-300 lie on the Cytoplasmic side of the membrane.

Belongs to the G-protein coupled receptor 1 family.

The protein resides in the cell membrane. Its function is as follows. G-protein coupled receptor for medium and long chain saturated and unsaturated fatty acids that plays an important role in glucose homeostasis. Fatty acid binding increases glucose-stimulated insulin secretion, and may also enhance the secretion of glucagon-like peptide 1 (GLP-1). May also play a role in bone homeostasis; receptor signaling activates pathways that inhibit osteoclast differentiation. Ligand binding leads to a conformation change that triggers signaling via G-proteins that activate phospholipase C, leading to an increase of the intracellular calcium concentration. Seems to act through a G(q) and G(i)-mediated pathway. Mediates the anti-inflammatory effects of omega-3 polyunsaturated fatty acids (PUFAs) via inhibition of NLRP3 inflammasome activation. In Mesocricetus auratus (Golden hamster), this protein is Free fatty acid receptor 1 (FFAR1).